The chain runs to 151 residues: Large ribosomal subunit protein uL22 (151 aa).

The protein belongs to the universal ribosomal protein uL22 family. In terms of assembly, part of the 50S ribosomal subunit.

Functionally, this protein binds specifically to 23S rRNA. It makes multiple contacts with different domains of the 23S rRNA in the assembled 50S subunit and ribosome. In terms of biological role, the globular domain of the protein is located near the polypeptide exit tunnel on the outside of the subunit, while an extended beta-hairpin is found that lines the wall of the exit tunnel in the center of the 70S ribosome. The protein is Large ribosomal subunit protein uL22 of Thermoplasma acidophilum (strain ATCC 25905 / DSM 1728 / JCM 9062 / NBRC 15155 / AMRC-C165).